The primary structure comprises 325 residues: NADH-quinone oxidoreductase subunit H (325 aa).

9 helical membrane-spanning segments follow: residues 11–31, 50–69, 81–101, 114–134, 154–174, 186–206, 237–257, 265–285, and 304–324; these read ILLSILKAVVILLVVVTCGAF, NRVGWGGSLQLVADMIKMFF, VIFTLAPMIAFTSLLLSFAIV, IGILFFLMMAGLAVYAVLFAG, VSYEVFLGLSLMGVVAQAGSF, LWNVIPQFFGFVTFAIAGVAV, FFVGEYIGIVTVSALMVTLFF, LPPFVWFALKTAFFMMMFILI, and VCLPLTLINLLVTAAVILWQA.

It belongs to the complex I subunit 1 family. In terms of assembly, NDH-1 is composed of 13 different subunits. Subunits NuoA, H, J, K, L, M, N constitute the membrane sector of the complex.

It is found in the cell inner membrane. It carries out the reaction a quinone + NADH + 5 H(+)(in) = a quinol + NAD(+) + 4 H(+)(out). NDH-1 shuttles electrons from NADH, via FMN and iron-sulfur (Fe-S) centers, to quinones in the respiratory chain. The immediate electron acceptor for the enzyme in this species is believed to be ubiquinone. Couples the redox reaction to proton translocation (for every two electrons transferred, four hydrogen ions are translocated across the cytoplasmic membrane), and thus conserves the redox energy in a proton gradient. This subunit may bind ubiquinone. This chain is NADH-quinone oxidoreductase subunit H, found in Salmonella arizonae (strain ATCC BAA-731 / CDC346-86 / RSK2980).